A 149-amino-acid polypeptide reads, in one-letter code: D-aminoacyl-tRNA deacylase (149 aa).

Positions 137–138 (GP) match the Gly-cisPro motif, important for rejection of L-amino acids motif.

It belongs to the DTD family. As to quaternary structure, homodimer.

It is found in the cytoplasm. The enzyme catalyses glycyl-tRNA(Ala) + H2O = tRNA(Ala) + glycine + H(+). It catalyses the reaction a D-aminoacyl-tRNA + H2O = a tRNA + a D-alpha-amino acid + H(+). An aminoacyl-tRNA editing enzyme that deacylates mischarged D-aminoacyl-tRNAs. Also deacylates mischarged glycyl-tRNA(Ala), protecting cells against glycine mischarging by AlaRS. Acts via tRNA-based rather than protein-based catalysis; rejects L-amino acids rather than detecting D-amino acids in the active site. By recycling D-aminoacyl-tRNA to D-amino acids and free tRNA molecules, this enzyme counteracts the toxicity associated with the formation of D-aminoacyl-tRNA entities in vivo and helps enforce protein L-homochirality. The sequence is that of D-aminoacyl-tRNA deacylase from Herminiimonas arsenicoxydans.